A 636-amino-acid polypeptide reads, in one-letter code: Biosynthetic arginine decarboxylase (636 aa).

Lys110 carries the post-translational modification N6-(pyridoxal phosphate)lysine. 290–300 (IDVGGGLGVDY) contacts substrate.

Belongs to the Orn/Lys/Arg decarboxylase class-II family. SpeA subfamily. Mg(2+) serves as cofactor. The cofactor is pyridoxal 5'-phosphate.

It catalyses the reaction L-arginine + H(+) = agmatine + CO2. Catalyzes the biosynthesis of agmatine from arginine. This Pseudomonas aeruginosa (strain ATCC 15692 / DSM 22644 / CIP 104116 / JCM 14847 / LMG 12228 / 1C / PRS 101 / PAO1) protein is Biosynthetic arginine decarboxylase.